The following is a 229-amino-acid chain: Transmembrane emp24 domain-containing protein 5 (229 aa).

Positions 1–27 (MGVRMWLPFPMLLLSALPATLLSGAAG) are cleaved as a signal peptide. Topologically, residues 28–196 (FTPSLDSDFT…IQESNFDRVN (169 aa)) are lumenal. The GOLD domain occupies 45–126 (KECFYQPMPL…EKVIFFELIL (82 aa)). A helical membrane pass occupies residues 197 to 217 (FWSVVNLMVMVVVSAIQVYTL). The Cytoplasmic segment spans residues 218–229 (KSLFEDKRKSRT).

The protein belongs to the EMP24/GP25L family. In terms of assembly, interacts with TMED9 and TMED10.

The protein resides in the endoplasmic reticulum membrane. It localises to the golgi apparatus. The protein localises to the cis-Golgi network membrane. Its subcellular location is the endoplasmic reticulum-Golgi intermediate compartment membrane. Functionally, potential role in vesicular protein trafficking, mainly in the early secretory pathway. Required for the maintenance of the Golgi apparatus; involved in protein exchange between Golgi stacks during assembly. Probably not required for COPI-vesicle-mediated retrograde transport. The protein is Transmembrane emp24 domain-containing protein 5 (Tmed5) of Rattus norvegicus (Rat).